Here is a 514-residue protein sequence, read N- to C-terminus: Prespore vesicle protein (514 aa).

A signal peptide spans 1–18 (MRLYLLSLILVFYASVSS). 2 consecutive Follistatin-like domains span residues 40–62 (LCGT…YICR) and 240–262 (TCET…AQCI). Polar residues predominate over residues 285 to 297 (QRNAKPAQQQRSA). The interval 285-514 (QRNAKPAQQQ…QARPATQKRN (230 aa)) is disordered. 3 stretches are compositionally biased toward low complexity: residues 328 to 391 (QHNA…HTAA), 398 to 413 (AAQQ…AKPA), and 424 to 457 (AAQQ…KPAK). Polar residues predominate over residues 480–508 (RIRQQNLVKQAAQKKQTSQRAASKNQARP).

This Dictyostelium discoideum (Social amoeba) protein is Prespore vesicle protein (psvA).